The chain runs to 98 residues: Integration host factor subunit beta (98 aa).

The protein belongs to the bacterial histone-like protein family. Heterodimer of an alpha and a beta chain.

This protein is one of the two subunits of integration host factor, a specific DNA-binding protein that functions in genetic recombination as well as in transcriptional and translational control. The sequence is that of Integration host factor subunit beta from Pseudomonas fluorescens (strain SBW25).